The sequence spans 144 residues: Granulocyte-macrophage colony-stimulating factor (144 aa).

Positions 1–17 (MWLQNLLFLGIVVYSFS) are cleaved as a signal peptide. S22 carries an O-linked (GalNAc...) serine glycan. An O-linked (GalNAc...) threonine glycan is attached at T27. Disulfide bonds link C71–C113 and C105–C138. N-linked (GlcNAc...) asparagine glycosylation is present at N86.

The protein belongs to the GM-CSF family. As to quaternary structure, monomer. The signaling GM-CSF receptor complex is a dodecamer of two head-to-head hexamers of two alpha, two beta, and two ligand subunits.

The protein resides in the secreted. Its function is as follows. Cytokine that stimulates the growth and differentiation of hematopoietic precursor cells from various lineages, including granulocytes, macrophages, eosinophils and erythrocytes. The polypeptide is Granulocyte-macrophage colony-stimulating factor (Csf2) (Rattus norvegicus (Rat)).